Here is a 495-residue protein sequence, read N- to C-terminus: Probable lysine-specific demethylase 4A (495 aa).

Positions 18 to 60 (IMTFRPSYEEFQNFSAYIEYIESRGAHLAGLAKIQPPAEWVPR) constitute a JmjN domain. Tyr-139 is a 2-oxoglutarate binding site. The JmjC domain maps to 149–315 (DEDLDVWNIG…YGKRASICRC (167 aa)). 2 residues coordinate Fe cation: His-195 and Glu-197. 2-oxoglutarate-binding residues include Asn-205 and Lys-213. Cys-241 and His-247 together coordinate Zn(2+). A 2-oxoglutarate-binding site is contributed by Lys-248. A Fe cation-binding site is contributed by His-283. Residues Cys-313 and Cys-315 each contribute to the Zn(2+) site. Ser-409 carries the post-translational modification Phosphoserine.

The protein belongs to the JHDM3 histone demethylase family. Requires Fe(2+) as cofactor.

It localises to the nucleus. It catalyses the reaction N(6),N(6),N(6)-trimethyl-L-lysyl(9)-[histone H3] + 2 2-oxoglutarate + 2 O2 = N(6)-methyl-L-lysyl(9)-[histone H3] + 2 formaldehyde + 2 succinate + 2 CO2. The enzyme catalyses N(6),N(6),N(6)-trimethyl-L-lysyl(36)-[histone H3] + 2 2-oxoglutarate + 2 O2 = N(6)-methyl-L-lysyl(36)-[histone H3] + 2 formaldehyde + 2 succinate + 2 CO2. Probable histone demethylase that specifically demethylates 'Lys-9' and 'Lys-36' residues of histone H3, thereby playing a central role in histone code. Demethylation of Lys residue generates formaldehyde and succinate. This chain is Probable lysine-specific demethylase 4A (Kdm4A), found in Drosophila melanogaster (Fruit fly).